The chain runs to 571 residues: Fumarate reductase (cytochrome) (571 aa).

Residues histidine 8, cysteine 14, cysteine 17, histidine 18, cysteine 36, cysteine 39, histidine 40, histidine 52, histidine 58, histidine 61, cysteine 68, cysteine 71, histidine 72, alanine 74, histidine 75, cysteine 82, cysteine 85, histidine 86, asparagine 91, and tyrosine 94 each coordinate heme c. Residues 118–571 (ALASAPHDTV…EEAAKYSKKN (454 aa)) are flavoprotein-like. FAD-binding residues include alanine 137, glutamate 156, asparagine 164, alanine 165, alanine 169, glycine 170, glycine 171, glycine 278, and glutamine 338. Glycine 170 provides a ligand contact to succinate. The succinate site is built by histidine 365, threonine 377, and glutamate 378. The fumarate site is built by threonine 377, glutamate 378, and arginine 402. Arginine 402 acts as the Proton donor in catalysis. Lysine 431 contributes to the heme c binding site. A succinate-binding site is contributed by histidine 504. Histidine 504 is a fumarate binding site. 2 residues coordinate FAD: histidine 505 and glutamate 534. Succinate is bound by residues arginine 544 and glycine 547. Residues arginine 544 and glycine 547 each contribute to the fumarate site. FAD is bound by residues alanine 549 and isoleucine 550.

Monomer. FAD is required as a cofactor. The cofactor is heme c.

The protein resides in the periplasm. It carries out the reaction 2 Fe(III)-[cytochrome c] + succinate = fumarate + 2 Fe(II)-[cytochrome c] + 2 H(+). Functionally, flavocytochrome that catalyzes the reduction of fumarate to succinate. Is essential for fumarate respiration during anaerobic growth, acting as the terminal reductase. Receives electrons from the membrane-bound tetraheme c-type cytochrome CymA. In vitro, can use the artificial electron donor methyl viologen. The chain is Fumarate reductase (cytochrome) (fccA) from Shewanella frigidimarina.